Consider the following 305-residue polypeptide: Methionyl-tRNA formyltransferase (305 aa).

S110–P113 contacts (6S)-5,6,7,8-tetrahydrofolate.

The protein belongs to the Fmt family.

The enzyme catalyses L-methionyl-tRNA(fMet) + (6R)-10-formyltetrahydrofolate = N-formyl-L-methionyl-tRNA(fMet) + (6S)-5,6,7,8-tetrahydrofolate + H(+). Its function is as follows. Attaches a formyl group to the free amino group of methionyl-tRNA(fMet). The formyl group appears to play a dual role in the initiator identity of N-formylmethionyl-tRNA by promoting its recognition by IF2 and preventing the misappropriation of this tRNA by the elongation apparatus. The protein is Methionyl-tRNA formyltransferase of Gluconacetobacter diazotrophicus (strain ATCC 49037 / DSM 5601 / CCUG 37298 / CIP 103539 / LMG 7603 / PAl5).